Consider the following 171-residue polypeptide: Co-chaperone protein HscB (171 aa).

The region spanning 2–74 (DYFTLFGLPA…LTRAEYLLSL (73 aa)) is the J domain.

It belongs to the HscB family. Interacts with HscA and stimulates its ATPase activity. Interacts with IscU.

Functionally, co-chaperone involved in the maturation of iron-sulfur cluster-containing proteins. Seems to help targeting proteins to be folded toward HscA. This chain is Co-chaperone protein HscB, found in Salmonella choleraesuis (strain SC-B67).